We begin with the raw amino-acid sequence, 1235 residues long: Ubiquitin carboxyl-terminal hydrolase 40 (1235 aa).

Positions 41–482 (SGIRNQGGTC…SAYMLFYRKA (442 aa)) constitute a USP domain. The active-site Nucleophile is C50. H305 serves as the catalytic Proton acceptor.

Belongs to the peptidase C19 family.

It carries out the reaction Thiol-dependent hydrolysis of ester, thioester, amide, peptide and isopeptide bonds formed by the C-terminal Gly of ubiquitin (a 76-residue protein attached to proteins as an intracellular targeting signal).. The polypeptide is Ubiquitin carboxyl-terminal hydrolase 40 (Usp40) (Mus musculus (Mouse)).